Consider the following 408-residue polypeptide: Acetylornithine aminotransferase (408 aa).

Residues 107-108 and Phe-141 each bind pyridoxal 5'-phosphate; that span reads GT. Arg-144 serves as a coordination point for N(2)-acetyl-L-ornithine. Position 227-230 (227-230) interacts with pyridoxal 5'-phosphate; the sequence is DEIQ. Position 256 is an N6-(pyridoxal phosphate)lysine (Lys-256). Thr-284 is a binding site for N(2)-acetyl-L-ornithine. Thr-285 provides a ligand contact to pyridoxal 5'-phosphate.

Belongs to the class-III pyridoxal-phosphate-dependent aminotransferase family. ArgD subfamily. In terms of assembly, homodimer. Pyridoxal 5'-phosphate is required as a cofactor.

The protein resides in the cytoplasm. It carries out the reaction N(2)-acetyl-L-ornithine + 2-oxoglutarate = N-acetyl-L-glutamate 5-semialdehyde + L-glutamate. It participates in amino-acid biosynthesis; L-arginine biosynthesis; N(2)-acetyl-L-ornithine from L-glutamate: step 4/4. This chain is Acetylornithine aminotransferase, found in Xanthomonas axonopodis pv. citri (strain 306).